A 267-amino-acid polypeptide reads, in one-letter code: Regulatory protein RecX (267 aa).

Belongs to the RecX family.

Its subcellular location is the cytoplasm. Modulates RecA activity. This Staphylococcus epidermidis (strain ATCC 12228 / FDA PCI 1200) protein is Regulatory protein RecX.